We begin with the raw amino-acid sequence, 550 residues long: Chaperonin GroEL (550 aa).

ATP contacts are provided by residues 30 to 33 (TLGP), K51, 87 to 91 (DGTTT), G416, 480 to 482 (NVA), and D496. Residues 525 to 550 (LPKKDDEGGGGDMGGMGGMGGMGGMM) form a disordered region. Positions 534-550 (GGDMGGMGGMGGMGGMM) are enriched in gly residues.

This sequence belongs to the chaperonin (HSP60) family. In terms of assembly, forms a cylinder of 14 subunits composed of two heptameric rings stacked back-to-back. Interacts with the co-chaperonin GroES.

It is found in the cytoplasm. The catalysed reaction is ATP + H2O + a folded polypeptide = ADP + phosphate + an unfolded polypeptide.. Functionally, together with its co-chaperonin GroES, plays an essential role in assisting protein folding. The GroEL-GroES system forms a nano-cage that allows encapsulation of the non-native substrate proteins and provides a physical environment optimized to promote and accelerate protein folding. This chain is Chaperonin GroEL, found in Halorhodospira halophila (strain DSM 244 / SL1) (Ectothiorhodospira halophila (strain DSM 244 / SL1)).